We begin with the raw amino-acid sequence, 372 residues long: Putative glutamate--cysteine ligase 2 (372 aa).

It belongs to the glutamate--cysteine ligase type 2 family. YbdK subfamily. As to quaternary structure, homodimer.

It carries out the reaction L-cysteine + L-glutamate + ATP = gamma-L-glutamyl-L-cysteine + ADP + phosphate + H(+). In terms of biological role, ATP-dependent carboxylate-amine ligase which exhibits weak glutamate--cysteine ligase activity. The chain is Putative glutamate--cysteine ligase 2 (ybdK) from Escherichia coli (strain K12 / MC4100 / BW2952).